Consider the following 214-residue polypeptide: Small ribosomal subunit protein eS6 (214 aa).

Belongs to the eukaryotic ribosomal protein eS6 family.

The sequence is that of Small ribosomal subunit protein eS6 (rps6e) from Saccharolobus islandicus (strain Y.G.57.14 / Yellowstone #1) (Sulfolobus islandicus).